A 424-amino-acid polypeptide reads, in one-letter code: Histidine--tRNA ligase (424 aa).

This sequence belongs to the class-II aminoacyl-tRNA synthetase family. As to quaternary structure, homodimer.

It localises to the cytoplasm. It catalyses the reaction tRNA(His) + L-histidine + ATP = L-histidyl-tRNA(His) + AMP + diphosphate + H(+). The sequence is that of Histidine--tRNA ligase from Salmonella typhi.